We begin with the raw amino-acid sequence, 633 residues long: Glutamyl-tRNA(Gln) amidotransferase subunit E (633 aa).

The interval 414 to 437 is disordered; the sequence is ALPDGNTEYMRPLPGKARMYPETD.

The protein belongs to the GatB/GatE family. GatE subfamily. As to quaternary structure, heterodimer of GatD and GatE.

The enzyme catalyses L-glutamyl-tRNA(Gln) + L-glutamine + ATP + H2O = L-glutaminyl-tRNA(Gln) + L-glutamate + ADP + phosphate + H(+). Allows the formation of correctly charged Gln-tRNA(Gln) through the transamidation of misacylated Glu-tRNA(Gln) in organisms which lack glutaminyl-tRNA synthetase. The reaction takes place in the presence of glutamine and ATP through an activated gamma-phospho-Glu-tRNA(Gln). The GatDE system is specific for glutamate and does not act on aspartate. The protein is Glutamyl-tRNA(Gln) amidotransferase subunit E of Pyrococcus abyssi (strain GE5 / Orsay).